The sequence spans 405 residues: CMP-sialic acid transporter 4 (405 aa).

Over 1–43 (MQRNGVMECSVCHSKVVAPSPRSVSRAYDKHRSKISSKYRALN) the chain is Cytoplasmic. Residues 44–64 (FLLVSGDCILVGLQPILVFMS) form a helical membrane-spanning segment. The Lumenal segment spans residues 65-74 (KVDGKFQFSP). A helical transmembrane segment spans residues 75 to 95 (ISVNFLTEVTKVIFAIVMLII). Residues 96-121 (QSRKQKVGEKPLLSLSTFVQAARNNA) lie on the Cytoplasmic side of the membrane. The chain crosses the membrane as a helical span at residues 122–142 (LLAVPALLYAINNYLKFIMQL). Residue Tyr143 is a topological domain, lumenal. A helical transmembrane segment spans residues 144-164 (FSPATVKMLSNLKVLVIAILL). Residues 165 to 171 (KFIMRRK) lie on the Cytoplasmic side of the membrane. A helical transmembrane segment spans residues 172–192 (FSIIQWEALALLLIGISVNQL). At 193–203 (SSIPDGTKSFG) the chain is on the lumenal side. The chain crosses the membrane as a helical span at residues 204–224 (LAVTTIAYIYTLIFVTVPSLA). At 225-244 (SVYNEYALKSQFDTSIYLQN) the chain is on the cytoplasmic side. Residues 245-265 (LFLYGYGAIFNFLGILGTVIF) traverse the membrane as a helical segment. The Lumenal portion of the chain corresponds to 266–281 (QGPESFDILRGHSRAT). A helical membrane pass occupies residues 282–302 (MFLICNNAAQGILSSFFFKYA). At 303-322 (DTILKKYSSTVATIFTGLAS) the chain is on the cytoplasmic side. A helical membrane pass occupies residues 323–343 (AAFLGHTLTVNFLLGISIVFI). The Lumenal portion of the chain corresponds to 344 to 405 (SMHQFFSPLA…TDERKPLLPI (62 aa)).

Belongs to the nucleotide-sugar transporter family. CMP-Sialate:CMP antiporter (TC 2.A.7.12) subfamily.

It localises to the golgi apparatus membrane. In terms of biological role, sugar transporter involved in the transport of CMP-sialic acid from the cytoplasm into the Golgi. May transport important nucleotide sugars such as CMP-Kdo (2-keto-3-deoxy-D-manno-octulosonic acid) in physiological conditions. This is CMP-sialic acid transporter 4 from Oryza sativa subsp. japonica (Rice).